We begin with the raw amino-acid sequence, 176 residues long: Protein FimF (176 aa).

The first 20 residues, 1–20 (MRNKPFYLLCAFLWLAVSHA), serve as a signal peptide directing secretion. Cys38 and Cys78 are oxidised to a cystine.

The protein belongs to the fimbrial protein family.

Its subcellular location is the fimbrium. In terms of biological role, involved in regulation of length and mediation of adhesion of type 1 fimbriae (but not necessary for the production of fimbriae). Involved in the integration of FimH in the fimbriae. The sequence is that of Protein FimF (fimF) from Escherichia coli (strain K12).